A 120-amino-acid polypeptide reads, in one-letter code: Large ribosomal subunit protein uL18 (120 aa).

The protein belongs to the universal ribosomal protein uL18 family. In terms of assembly, part of the 50S ribosomal subunit; part of the 5S rRNA/L5/L18/L25 subcomplex. Contacts the 5S and 23S rRNAs.

This is one of the proteins that bind and probably mediate the attachment of the 5S RNA into the large ribosomal subunit, where it forms part of the central protuberance. The polypeptide is Large ribosomal subunit protein uL18 (Rhodopseudomonas palustris (strain BisB18)).